The sequence spans 986 residues: Epidermin biosynthesis protein EpiB (986 aa).

This sequence to B.subtilis SpaB and L.lactis NisB.

Its subcellular location is the cell membrane. Functionally, involved in the post-translational modification of the lantibiotic epidermin. The protein is Epidermin biosynthesis protein EpiB (epiB) of Staphylococcus epidermidis.